Consider the following 615-residue polypeptide: 1-deoxy-D-xylulose-5-phosphate synthase (615 aa).

Thiamine diphosphate contacts are provided by residues His76 and 117–119 (GHS). Asp148 lines the Mg(2+) pocket. Residues 149-150 (GA), Asn177, Tyr284, and Glu365 contribute to the thiamine diphosphate site. Asn177 provides a ligand contact to Mg(2+).

This sequence belongs to the transketolase family. DXPS subfamily. Homodimer. The cofactor is Mg(2+). It depends on thiamine diphosphate as a cofactor.

It carries out the reaction D-glyceraldehyde 3-phosphate + pyruvate + H(+) = 1-deoxy-D-xylulose 5-phosphate + CO2. The protein operates within metabolic intermediate biosynthesis; 1-deoxy-D-xylulose 5-phosphate biosynthesis; 1-deoxy-D-xylulose 5-phosphate from D-glyceraldehyde 3-phosphate and pyruvate: step 1/1. Functionally, catalyzes the acyloin condensation reaction between C atoms 2 and 3 of pyruvate and glyceraldehyde 3-phosphate to yield 1-deoxy-D-xylulose-5-phosphate (DXP). In Francisella tularensis subsp. tularensis (strain FSC 198), this protein is 1-deoxy-D-xylulose-5-phosphate synthase.